The chain runs to 280 residues: Diaminopimelate epimerase (280 aa).

The substrate site is built by Asn-11 and Asn-64. The active-site Proton donor is Cys-73. Substrate-binding positions include 74–75 (GN), Asn-162, Asn-195, and 213–214 (ER). The active-site Proton acceptor is Cys-222. 223-224 (GT) lines the substrate pocket.

The protein belongs to the diaminopimelate epimerase family. Homodimer.

Its subcellular location is the cytoplasm. The catalysed reaction is (2S,6S)-2,6-diaminopimelate = meso-2,6-diaminopimelate. It participates in amino-acid biosynthesis; L-lysine biosynthesis via DAP pathway; DL-2,6-diaminopimelate from LL-2,6-diaminopimelate: step 1/1. In terms of biological role, catalyzes the stereoinversion of LL-2,6-diaminopimelate (L,L-DAP) to meso-diaminopimelate (meso-DAP), a precursor of L-lysine and an essential component of the bacterial peptidoglycan. The protein is Diaminopimelate epimerase of Pelotomaculum thermopropionicum (strain DSM 13744 / JCM 10971 / SI).